The following is a 378-amino-acid chain: 4-hydroxy-3-methylbut-2-en-1-yl diphosphate synthase (flavodoxin) (378 aa).

Cys268, Cys271, Cys303, and Glu310 together coordinate [4Fe-4S] cluster.

The protein belongs to the IspG family. It depends on [4Fe-4S] cluster as a cofactor.

It carries out the reaction (2E)-4-hydroxy-3-methylbut-2-enyl diphosphate + oxidized [flavodoxin] + H2O + 2 H(+) = 2-C-methyl-D-erythritol 2,4-cyclic diphosphate + reduced [flavodoxin]. The protein operates within isoprenoid biosynthesis; isopentenyl diphosphate biosynthesis via DXP pathway; isopentenyl diphosphate from 1-deoxy-D-xylulose 5-phosphate: step 5/6. Its function is as follows. Converts 2C-methyl-D-erythritol 2,4-cyclodiphosphate (ME-2,4cPP) into 1-hydroxy-2-methyl-2-(E)-butenyl 4-diphosphate. This Corynebacterium efficiens (strain DSM 44549 / YS-314 / AJ 12310 / JCM 11189 / NBRC 100395) protein is 4-hydroxy-3-methylbut-2-en-1-yl diphosphate synthase (flavodoxin).